The primary structure comprises 571 residues: MRTSNYLLSTLKETPNDAEVISHQLMLRAGMIRKLASGLYTWLPTGLRVLRKVENIVRQEIDNAGAVEILMPVVQPFELWEETGRSEKMGPELLRFTDRHSRPFVLSPTAEEVVTSLVRNEISSYKQLPLNLYQIQTKFRDERRPRFGVMRAREFSMMDAYSFDIDKEGLEKSYQAMHDAYCKAFDRMGLEYRPVLADSGAIGGSGSQEFHVLAESGEDLIAFSSESDYAANIEKAEALAPTEEVAAPTQEMELVDTPNAKTIAELVEQHGLAIEKTVKTLFVKASDEVEADIIALIVRGDHELNEVKAENLPQIASPLEMASEEEIRALVGAGPGSLGPVGLELPFIADRSVAVMSDFGAGANVDGKHYFGINWGRDVELAQVEDLRNVVEGDLSPCGQGTIQLKRGIEVGHIFQLGNTYSKAMNCNVLGPDGKSVILEMGCYGIGVSRVVASAIEQNHDKFGITWPDALAPFQVAIVPMNMHKSERVKEAAEKLYAELTAMGIEVLFDDRKERPGVMFKDIELVGIPHTIVIGDRSMDEGNFEYKNRRTGDKEAIAMDTVIEHLKAQLA.

This sequence belongs to the class-II aminoacyl-tRNA synthetase family. ProS type 1 subfamily. Homodimer.

It is found in the cytoplasm. It carries out the reaction tRNA(Pro) + L-proline + ATP = L-prolyl-tRNA(Pro) + AMP + diphosphate. Catalyzes the attachment of proline to tRNA(Pro) in a two-step reaction: proline is first activated by ATP to form Pro-AMP and then transferred to the acceptor end of tRNA(Pro). As ProRS can inadvertently accommodate and process non-cognate amino acids such as alanine and cysteine, to avoid such errors it has two additional distinct editing activities against alanine. One activity is designated as 'pretransfer' editing and involves the tRNA(Pro)-independent hydrolysis of activated Ala-AMP. The other activity is designated 'posttransfer' editing and involves deacylation of mischarged Ala-tRNA(Pro). The misacylated Cys-tRNA(Pro) is not edited by ProRS. In Vibrio atlanticus (strain LGP32) (Vibrio splendidus (strain Mel32)), this protein is Proline--tRNA ligase.